A 128-amino-acid polypeptide reads, in one-letter code: Large ribosomal subunit protein bL17 (128 aa).

It belongs to the bacterial ribosomal protein bL17 family. As to quaternary structure, part of the 50S ribosomal subunit. Contacts protein L32.

The protein is Large ribosomal subunit protein bL17 of Glaesserella parasuis serovar 5 (strain SH0165) (Haemophilus parasuis).